The chain runs to 136 residues: Protein NrdI (136 aa).

This sequence belongs to the NrdI family.

Its function is as follows. Probably involved in ribonucleotide reductase function. This is Protein NrdI from Salmonella typhi.